A 550-amino-acid polypeptide reads, in one-letter code: DNA mismatch repair protein MutL (550 aa).

This sequence belongs to the DNA mismatch repair MutL/HexB family.

This protein is involved in the repair of mismatches in DNA. It is required for dam-dependent methyl-directed DNA mismatch repair. May act as a 'molecular matchmaker', a protein that promotes the formation of a stable complex between two or more DNA-binding proteins in an ATP-dependent manner without itself being part of a final effector complex. This is DNA mismatch repair protein MutL from Microcystis aeruginosa (strain NIES-843 / IAM M-2473).